The chain runs to 167 residues: Crossover junction endodeoxyribonuclease RuvC (167 aa).

Residues D11, E71, and D143 contribute to the active site. Mg(2+) contacts are provided by D11, E71, and D143.

This sequence belongs to the RuvC family. Homodimer which binds Holliday junction (HJ) DNA. The HJ becomes 2-fold symmetrical on binding to RuvC with unstacked arms; it has a different conformation from HJ DNA in complex with RuvA. In the full resolvosome a probable DNA-RuvA(4)-RuvB(12)-RuvC(2) complex forms which resolves the HJ. Requires Mg(2+) as cofactor.

The protein resides in the cytoplasm. It catalyses the reaction Endonucleolytic cleavage at a junction such as a reciprocal single-stranded crossover between two homologous DNA duplexes (Holliday junction).. Functionally, the RuvA-RuvB-RuvC complex processes Holliday junction (HJ) DNA during genetic recombination and DNA repair. Endonuclease that resolves HJ intermediates. Cleaves cruciform DNA by making single-stranded nicks across the HJ at symmetrical positions within the homologous arms, yielding a 5'-phosphate and a 3'-hydroxyl group; requires a central core of homology in the junction. The consensus cleavage sequence is 5'-(A/T)TT(C/G)-3'. Cleavage occurs on the 3'-side of the TT dinucleotide at the point of strand exchange. HJ branch migration catalyzed by RuvA-RuvB allows RuvC to scan DNA until it finds its consensus sequence, where it cleaves and resolves the cruciform DNA. This chain is Crossover junction endodeoxyribonuclease RuvC, found in Hyphomonas neptunium (strain ATCC 15444).